Reading from the N-terminus, the 649-residue chain is Protein phosphatase Slingshot homolog 3 (649 aa).

Over residues 1–20 (MALVTVSRSPPASGHSTPVG) the composition is skewed to polar residues. The tract at residues 1–32 (MALVTVSRSPPASGHSTPVGPTQDRVVRRRGR) is disordered. An N-acetylalanine modification is found at alanine 2. 2 positions are modified to phosphoserine: serine 9 and serine 38. A disordered region spans residues 49–90 (LQDGGDSNVASEADSEPMEEPSGEEQPTEDQTDKGQGLQSPW). Residues 61-78 (ADSEPMEEPSGEEQPTED) are compositionally biased toward acidic residues. Serine 88 carries the post-translational modification Phosphoserine. One can recognise a DEK-C domain in the interval 266 to 321 (EKMEQAILAELWQVLDTSDLDSVTSKEIRQALELRLGCPLQQYRDFIDNQMLLLMA). A Tyrosine-protein phosphatase domain is found at 325-466 (RASRIFPHLY…LRTYQGILTA (142 aa)). The active-site Phosphocysteine intermediate is the cysteine 410. Composition is skewed to low complexity over residues 541–551 (LEPSESESTPE) and 608–627 (TRAFQEQGQGQEQSEPGMSS). Disordered stretches follow at residues 541 to 586 (LEPS…KGPW) and 608 to 649 (TRAF…EDKA). A compositionally biased stretch (basic and acidic residues) spans 639–649 (SVDDSREEDKA).

The protein belongs to the protein-tyrosine phosphatase family. Does not bind to, or colocalize with, filamentous actin. Expressed in brain, small intestine and testis. Also expressed at lower levels in heart, kidney, liver, spleen and thymus.

Its subcellular location is the cytoplasm. It is found in the cytoskeleton. It localises to the nucleus. It carries out the reaction O-phospho-L-tyrosyl-[protein] + H2O = L-tyrosyl-[protein] + phosphate. It catalyses the reaction O-phospho-L-seryl-[protein] + H2O = L-seryl-[protein] + phosphate. The catalysed reaction is O-phospho-L-threonyl-[protein] + H2O = L-threonyl-[protein] + phosphate. In terms of biological role, protein phosphatase which may play a role in the regulation of actin filament dynamics. Can dephosphorylate and activate the actin binding/depolymerizing factor cofilin, which subsequently binds to actin filaments and stimulates their disassembly. The protein is Protein phosphatase Slingshot homolog 3 (Ssh3) of Mus musculus (Mouse).